The primary structure comprises 841 residues: uncharacterized protein (841 aa).

An N-terminal signal peptide occupies residues 1-31; that stretch reads MKIERYFKAIARAFIITFLFSLILQDNGVLA.

It localises to the secreted. This is an uncharacterized protein from Schizosaccharomyces pombe (strain 972 / ATCC 24843) (Fission yeast).